Consider the following 252-residue polypeptide: Transcription factor bHLH117 (252 aa).

Residues 103-141 (LFPSLSPPLPAAKRQKLNSTSSSTTSGSPTASNDGGIIT) form a disordered region. A compositionally biased stretch (low complexity) spans 121 to 134 (STSSSTTSGSPTAS). The bHLH domain maps to 130–179 (SPTASNDGGIITKRRKISDKIRSLEKLMPWERKMNLAMTLEESHKYIKFL).

As to quaternary structure, homodimer.

It localises to the nucleus. The polypeptide is Transcription factor bHLH117 (BHLH117) (Arabidopsis thaliana (Mouse-ear cress)).